The following is a 689-amino-acid chain: Choline transporter-like 1 (689 aa).

Residues 23 to 43 (IFWLVVYILFWIALLVIAVFS) traverse the membrane as a helical segment. The N-linked (GlcNAc...) asparagine glycan is linked to Asn-134. Transmembrane regions (helical) follow at residues 199–219 (FSDIYKTWPTVLLLVGLSLIF) and 233–255 (IISWLICIFVAVASIGITAVLWW). The N-linked (GlcNAc...) asparagine glycan is linked to Asn-279. The next 2 membrane-spanning stretches (helical) occupy residues 283–303 (IYVLAILATCIMIILLVVIYY) and 333–353 (VLAFIALAVFLSFWMVVIVCL). Asn-375 and Asn-389 each carry an N-linked (GlcNAc...) asparagine glycan. Helical transmembrane passes span 412–432 (IYIIGLVWTSEFIFACQQLVI), 461–481 (LGSVAKGSFIITLFKIPRLIL), 562–582 (LVLFLGKLAVAALCGLISILM), and 591–611 (FYMAPVIIITLFSFFVAHIVL).

This sequence belongs to the CTL (choline transporter-like) family.

Its subcellular location is the membrane. This is Choline transporter-like 1 from Aedes aegypti (Yellowfever mosquito).